The primary structure comprises 270 residues: tRNA pseudouridine synthase B (270 aa).

Residue Asp-49 is the Nucleophile of the active site.

It belongs to the pseudouridine synthase TruB family. Type 1 subfamily.

The enzyme catalyses uridine(55) in tRNA = pseudouridine(55) in tRNA. Responsible for synthesis of pseudouridine from uracil-55 in the psi GC loop of transfer RNAs. The polypeptide is tRNA pseudouridine synthase B (Bartonella quintana (strain Toulouse) (Rochalimaea quintana)).